Here is a 264-residue protein sequence, read N- to C-terminus: MKSKLKLHGFNNLTKTLSFNIYDICYAETPEDLQAYVQYIDEEYDAERLTQILTDVVDIIGANILNIARQDYDPQGASVTILISEQPVTPTDSQIEESPGPLPDTILAHLDKSHITVHTYPEIHPVDGIATFRVDIDVSTCGVISPLKALNYLIHQFDSDIVTVDYRVRGFTRDIEGRKHFIDHEINSIQNYLSDDTREAYQMTDVNVYQENLFHTKMLLKDFELENYLFGDATRTLSAEQREQVTERLKHEMLEIFYARNMPR.

Serine 113 functions as the Schiff-base intermediate with substrate; via pyruvic acid in the catalytic mechanism. Serine 113 carries the pyruvic acid (Ser); by autocatalysis modification. The active-site Proton acceptor; for processing activity is the histidine 118. Catalysis depends on cysteine 141, which acts as the Proton donor; for catalytic activity.

It belongs to the prokaryotic AdoMetDC family. Type 2 subfamily. In terms of assembly, heterooctamer of four alpha and four beta chains arranged as a tetramer of alpha/beta heterodimers. It depends on pyruvate as a cofactor. In terms of processing, is synthesized initially as an inactive proenzyme. Formation of the active enzyme involves a self-maturation process in which the active site pyruvoyl group is generated from an internal serine residue via an autocatalytic post-translational modification. Two non-identical subunits are generated from the proenzyme in this reaction, and the pyruvate is formed at the N-terminus of the alpha chain, which is derived from the carboxyl end of the proenzyme. The post-translation cleavage follows an unusual pathway, termed non-hydrolytic serinolysis, in which the side chain hydroxyl group of the serine supplies its oxygen atom to form the C-terminus of the beta chain, while the remainder of the serine residue undergoes an oxidative deamination to produce ammonia and the pyruvoyl group blocking the N-terminus of the alpha chain.

It carries out the reaction S-adenosyl-L-methionine + H(+) = S-adenosyl 3-(methylsulfanyl)propylamine + CO2. It participates in amine and polyamine biosynthesis; S-adenosylmethioninamine biosynthesis; S-adenosylmethioninamine from S-adenosyl-L-methionine: step 1/1. Functionally, catalyzes the decarboxylation of S-adenosylmethionine to S-adenosylmethioninamine (dcAdoMet), the propylamine donor required for the synthesis of the polyamines spermine and spermidine from the diamine putrescine. This is S-adenosylmethionine decarboxylase proenzyme from Pseudomonas aeruginosa (strain ATCC 15692 / DSM 22644 / CIP 104116 / JCM 14847 / LMG 12228 / 1C / PRS 101 / PAO1).